The primary structure comprises 72 residues: MAKEDCIEMEGVVLEALPNTMFRVELENGHIVTAHISGKMRKNYIRILTGDKVVVEITPYDLTKGRIKFRSK.

One can recognise an S1-like domain in the interval 1 to 72 (MAKEDCIEME…TKGRIKFRSK (72 aa)).

Belongs to the IF-1 family. In terms of assembly, component of the 30S ribosomal translation pre-initiation complex which assembles on the 30S ribosome in the order IF-2 and IF-3, IF-1 and N-formylmethionyl-tRNA(fMet); mRNA recruitment can occur at any time during PIC assembly.

Its subcellular location is the cytoplasm. Its function is as follows. One of the essential components for the initiation of protein synthesis. Stabilizes the binding of IF-2 and IF-3 on the 30S subunit to which N-formylmethionyl-tRNA(fMet) subsequently binds. Helps modulate mRNA selection, yielding the 30S pre-initiation complex (PIC). Upon addition of the 50S ribosomal subunit IF-1, IF-2 and IF-3 are released leaving the mature 70S translation initiation complex. The sequence is that of Translation initiation factor IF-1 from Francisella tularensis subsp. novicida (strain U112).